Here is a 101-residue protein sequence, read N- to C-terminus: Small ribosomal subunit protein uS14 (101 aa).

Belongs to the universal ribosomal protein uS14 family. Part of the 30S ribosomal subunit. Contacts proteins S3 and S10.

In terms of biological role, binds 16S rRNA, required for the assembly of 30S particles and may also be responsible for determining the conformation of the 16S rRNA at the A site. This chain is Small ribosomal subunit protein uS14, found in Chlamydia abortus (strain DSM 27085 / S26/3) (Chlamydophila abortus).